The chain runs to 689 residues: MFERNQKTIFVLDHTRYFSIASEEYISMDFLKGKPSGDGGATGAAGNATGSGGSQFSKSLWTCACESSIEYCRVVWDLFPGKKHVRFIVSDTAAHIVNTWSPSTQNMSHVMNAMVMVGVPSRNVPTSSDYSVIHGLRAAIEALAEPTDEQLAAMADLGTDELPRIPNKGRVICITSARDNTSMKSLEDIFNTVLVQQNTLAAPPAKKGLVIDHCHLVILNIVPLGVESLVTNRSLLKISPLLDVEIHTVSAPDISYKLTHLILNHYDLASTTVTNIPMKEEQNANSSANYDVEILHSRRAHSITCGPDFSLPTSIKQGATYETVTLKWCTPRGCGSAHLQPCLGQFLVTPVDVTSRPSSCLINFLLNGRSVLLEMPRKTGSKATSHMLSARGGEIFVHSLCITRSCMDEAPSITDGPGGRVSDYRTAELGQLIKMSRMVPLKVKDPSAPPLTRRLPRYFPLTTSSSILFHLQRHISWLPHFLHLLVKEDMDKQDEVRCQQHIHELYKSASRGDVLPFTHTNGARLKLSKAKDQYRLLYRELEQLIQLNATTMHHKNLLESLQSLRAAYGDAPLKSEPGASLLRSFTESPLSPERLEPISSVGASGSSNSNSLLKASKRRMSSCGQRSLLDIISSAERSQSNKRLDFSGRLCTPLGQVAKLYPEFGTKDKDAVTTGASITPNVKEESVRS.

A coiled-coil region spans residues 521 to 550; it reads NGARLKLSKAKDQYRLLYRELEQLIQLNAT. Disordered regions lie at residues 591–619 and 669–689; these read SPER…SKRR and KDAV…SVRS. The segment covering 599–614 has biased composition (low complexity); that stretch reads SSVGASGSSNSNSLLK. The Nuclear localization signal (NLS) motif lies at 613 to 619; sequence LKASKRR.

It belongs to the Integrator subunit 13 family. In terms of assembly, belongs to the multiprotein complex Integrator, at least composed of IntS1, IntS2, IntS3, IntS4, omd/IntS5, IntS6, defl/IntS7, IntS8, IntS9, IntS10, IntS11, IntS12, asun/IntS13, IntS14 and IntS15. The core complex associates with protein phosphatase 2A subunits mts/PP2A and Pp2A-29B, to form the Integrator-PP2A (INTAC) complex. Post-translationally, phosphorylated.

It is found in the nucleus. The protein resides in the cytoplasm. It localises to the perinuclear region. In terms of biological role, component of the integrator complex, a multiprotein complex that terminates RNA polymerase II (Pol II) transcription in the promoter-proximal region of genes. The integrator complex provides a quality checkpoint during transcription elongation by driving premature transcription termination of transcripts that are unfavorably configured for transcriptional elongation: the complex terminates transcription by (1) catalyzing dephosphorylation of the C-terminal domain (CTD) of Pol II subunit Polr2A/Rbp1 and Spt5, and (2) degrading the exiting nascent RNA transcript via endonuclease activity. The integrator complex is also involved in the 3'-end processing of the U7 snRNA, and also the spliceosomal snRNAs U1, U2, U4 and U5. The protein is Protein asunder (asun) of Drosophila simulans (Fruit fly).